We begin with the raw amino-acid sequence, 876 residues long: Probable galactinol--sucrose galactosyltransferase 4 (876 aa).

Serine 7 and serine 9 each carry phosphoserine.

Belongs to the glycosyl hydrolases 36 family.

The enzyme catalyses alpha-D-galactosyl-(1-&gt;3)-1D-myo-inositol + sucrose = raffinose + myo-inositol. Its function is as follows. Transglycosidase operating by a ping-pong reaction mechanism. Involved in the synthesis of raffinose, a major soluble carbohydrate in seeds, roots and tubers. This is Probable galactinol--sucrose galactosyltransferase 4 (RFS4) from Arabidopsis thaliana (Mouse-ear cress).